The primary structure comprises 71 residues: Large ribosomal subunit protein bL31 (71 aa).

Positions 16, 18, 38, and 41 each coordinate Zn(2+).

The protein belongs to the bacterial ribosomal protein bL31 family. Type A subfamily. As to quaternary structure, part of the 50S ribosomal subunit. Zn(2+) serves as cofactor.

In terms of biological role, binds the 23S rRNA. This is Large ribosomal subunit protein bL31 from Neisseria gonorrhoeae (strain ATCC 700825 / FA 1090).